A 527-amino-acid chain; its full sequence is ARS-binding protein 2 (527 aa).

3 disordered regions span residues 160–184 (PDVN…HSAS), 219–265 (SHHM…NSHN), and 282–344 (IDPD…IKRL). Over residues 164-177 (SSSISTMRTSTSPS) the composition is skewed to low complexity. The segment covering 225–239 (RGSQQAHQTTPQNHS) has biased composition (polar residues). The span at 284 to 303 (PDWHQWPDDLRDVSSPKESD) shows a compositional bias: basic and acidic residues. Residues Ser-297, Ser-298, and Ser-302 each carry the phosphoserine modification. Positions 328–343 (PRKRGRPPGARNKIKR) are enriched in basic residues.

The protein resides in the nucleus. Binds, preferentially, to the Maundrell ARS consensus sequence within ARS3002. This is ARS-binding protein 2 (abp2) from Schizosaccharomyces pombe (strain 972 / ATCC 24843) (Fission yeast).